We begin with the raw amino-acid sequence, 73 residues long: UPF0435 protein lwe1727 (73 aa).

Belongs to the UPF0435 family.

This is UPF0435 protein lwe1727 from Listeria welshimeri serovar 6b (strain ATCC 35897 / DSM 20650 / CCUG 15529 / CIP 8149 / NCTC 11857 / SLCC 5334 / V8).